A 292-amino-acid polypeptide reads, in one-letter code: Polyketide transferase af380 (292 aa).

The tract at residues 46–267 (DVAVWFQQQG…FDLVAGRGHM (222 aa)) is abhydrolase domain.

Belongs to the polyketide transferase af380 family.

The enzyme catalyses fumagillol + dodecapentaneoyl-[polyketide synthase] = prefumagillin + holo-[polyketide synthase]. It participates in secondary metabolite biosynthesis; terpenoid biosynthesis. In terms of biological role, polyketide transferase; part of the gene cluster that mediates the biosynthesis of fumagillin, a meroterpenoid that has numerous biological activities including irreversible inhibition of human type 2 methionine aminopeptidase (METAP2). Within the pathway, the polyketide transferase af380 catalyzes the transfer of a dodecapentaenoyl group synthesized by the polyketide synthase af370 onto 5R-hydroxy-seco-sesquiterpene to produce prefumagillin. The pathway begins with the conversion of farnesyl pyrophosphate (FPP) to beta-trans-bergamotene by the membrane-bound beta-trans-bergamotene synthase af520. The multifunctional cytochrome P450 monooxygenase af510 then converts beta-trans-bergamotene into 5-keto-demethoxyfumagillol via several oxydation steps. 5-keto-demethoxyfumagillol is then subjected to successive C-6 hydroxylation and O-methylation by the dioxygenase af480 and O-methyltransferase af390-400, respectively, to yield 5-keto-fumagillol, which is then stereoselectively reduced by the keto-reductase af490 to 5R-hydroxy-seco-sesquiterpene. The next step is the polyketide transferase af380-catalyzed transfer of a dodecapentaenoyl group synthesized by the polyketide synthase af370 onto 5R-hydroxy-seco-sesquiterpene which leads to the production of prefumagillin. Finally, oxidative cleavage by the monooxygenase af470 converts prefumagillin to fumagillin. The polypeptide is Polyketide transferase af380 (Aspergillus fumigatus (strain ATCC MYA-4609 / CBS 101355 / FGSC A1100 / Af293) (Neosartorya fumigata)).